The following is a 147-amino-acid chain: Large ribosomal subunit protein uL13 (147 aa).

This sequence belongs to the universal ribosomal protein uL13 family. As to quaternary structure, part of the 50S ribosomal subunit.

Functionally, this protein is one of the early assembly proteins of the 50S ribosomal subunit, although it is not seen to bind rRNA by itself. It is important during the early stages of 50S assembly. In Rhodococcus jostii (strain RHA1), this protein is Large ribosomal subunit protein uL13.